Reading from the N-terminus, the 383-residue chain is Adaptive-response sensory kinase SasA (383 aa).

In terms of domain architecture, Histidine kinase spans 161-383; it reads MLAHDLRSPL…SFHFTLPVYR (223 aa). Phosphohistidine; by autocatalysis is present on His-164.

In terms of assembly, homooligomerizes. Interacts with KaiC1. Interacts with KaiC1 and RpaA. Binds to the B-loop in the CI domain of KaiC; SasA and KaiB compete to bind to the CI domain.

It catalyses the reaction ATP + protein L-histidine = ADP + protein N-phospho-L-histidine.. Member of the two-component regulatory system SasA/RpaA involved in genome-wide circadian gene expression. One of several clock output pathways. Participates in the Kai clock protein complex, the main circadian regulator in cyanobacteria, via its interaction with KaiC. KaiC enhances the autophosphorylation activity of SasA, which then transfers its phosphate group to RpaA to activate it. In addition to its output function, recruits fold-shifted KaiB (KaiB(fs)) to KaiC to cooperatively form the KaiB(6):KaiC(6) complex (independent of SasA kinase activity). Required for robustness of the circadian rhythm of gene expression and is involved in clock output, also required for adaptation to light/dark cycles. In terms of biological role, plays an important role in glucose metabolism, important for expression of genes involved in glycolysis, gluconeogenesis, the oxidative pentose phosphate pathway, and glycogen metabolism. Required for heterotrophic growth. Overexpression from the psbAII promoter leads to altered levels of genes involved in carbon metabolism, increased levels of transcripts for clock oscillator genes in the light and the dark, complete loss of glycogen accumulation, decreased levels of metabolites of sugar catabolism and increased levels of amino acids in the light and increased levels of SigE protein. The polypeptide is Adaptive-response sensory kinase SasA (Synechocystis sp. (strain ATCC 27184 / PCC 6803 / Kazusa)).